The chain runs to 306 residues: Pantothenate kinase (306 aa).

Residue 91-98 (GSVAVGKS) participates in ATP binding.

This sequence belongs to the prokaryotic pantothenate kinase family.

It is found in the cytoplasm. It catalyses the reaction (R)-pantothenate + ATP = (R)-4'-phosphopantothenate + ADP + H(+). It functions in the pathway cofactor biosynthesis; coenzyme A biosynthesis; CoA from (R)-pantothenate: step 1/5. In Streptococcus pyogenes serotype M3 (strain ATCC BAA-595 / MGAS315), this protein is Pantothenate kinase (coaA).